A 639-amino-acid chain; its full sequence is 1-deoxy-D-xylulose-5-phosphate synthase (639 aa).

Thiamine diphosphate contacts are provided by residues H76 and 117–119 (AHS). D148 provides a ligand contact to Mg(2+). Residues 149-150 (GS), N181, Y288, and E370 contribute to the thiamine diphosphate site. N181 contributes to the Mg(2+) binding site.

The protein belongs to the transketolase family. DXPS subfamily. In terms of assembly, homodimer. The cofactor is Mg(2+). It depends on thiamine diphosphate as a cofactor.

It catalyses the reaction D-glyceraldehyde 3-phosphate + pyruvate + H(+) = 1-deoxy-D-xylulose 5-phosphate + CO2. The protein operates within metabolic intermediate biosynthesis; 1-deoxy-D-xylulose 5-phosphate biosynthesis; 1-deoxy-D-xylulose 5-phosphate from D-glyceraldehyde 3-phosphate and pyruvate: step 1/1. Functionally, catalyzes the acyloin condensation reaction between C atoms 2 and 3 of pyruvate and glyceraldehyde 3-phosphate to yield 1-deoxy-D-xylulose-5-phosphate (DXP). This Leptothrix cholodnii (strain ATCC 51168 / LMG 8142 / SP-6) (Leptothrix discophora (strain SP-6)) protein is 1-deoxy-D-xylulose-5-phosphate synthase.